Reading from the N-terminus, the 483-residue chain is Glutathione reductase (483 aa).

Position 1 is an N-acetylmethionine (M1). At L2 the chain carries N-acetylserine. Residues S33 and G34 each contribute to the FAD site. Glutathione is bound at residue S33. R40 is a glutathione binding site. Residues E53, T60, C61, and K69 each coordinate FAD. A disulfide bridge connects residues C61 and C66. Y123 is a binding site for glutathione. An FAD-binding site is contributed by A139. The NADP(+) site is built by A205, I208, E211, R228, and R234. T243 contributes to the glutathione binding site. N278 carries an N-linked (GlcNAc...) asparagine glycan. G294 contacts NADP(+). D334 contributes to the FAD binding site. Residue E340 coordinates NADP(+). Residue T342 participates in FAD binding. R350 provides a ligand contact to glutathione. V375 serves as a coordination point for NADP(+). K425 provides a ligand contact to glutathione. Residue H472 participates in FAD binding. H472 serves as the catalytic Proton acceptor.

The protein belongs to the class-I pyridine nucleotide-disulfide oxidoreductase family. As to quaternary structure, homodimer. It depends on FAD as a cofactor.

The protein localises to the cytoplasm. The protein resides in the nucleus. It localises to the mitochondrion. Its subcellular location is the peroxisome. The enzyme catalyses 2 glutathione + NADP(+) = glutathione disulfide + NADPH + H(+). Its function is as follows. Catalyzes the reduction of glutathione disulfide (GSSG) to reduced glutathione (GSH). Constitutes the major mechanism to maintain a high GSH:GSSG ratio in the cytosol. This Saccharomyces cerevisiae (strain ATCC 204508 / S288c) (Baker's yeast) protein is Glutathione reductase.